Consider the following 493-residue polypeptide: MIAIVVSRADSASEHIGEHLLDLGDWERRDDPSRPDADGGGTYYRTDGFELREFDDLHIYLDDPAAAFGGGAGDETNDAASDDTDETPEFLAFVSRHSGETGELLTAHVTGNFGPAPYGGEPDTLARAAPGAEKRVVEALAAHAPEGYDVGIECTHHGPTDTSVPSLFVELGSDEPQWTDADAARAVARAVLDLRGTDADLVTDAGETTDEIDDDPHPRHVVGFGGGHYAPRFTRIVRETEWAVGHVGADWALGELGAPDANRDVIEQAFARSKANVAVIEGEKPDLEATVEALGHRVVSETWVRAVGDRPLPLVERLESDLATIDEGLRFGEVVPASPDAIRVRGLPEDLLSRAQGVDADAARVAVETNAVAFDTEQAGTRAAGSVAFADDEVSPGYDDLVADLAGVLERGYDTVDITDGAVIARETAFDPELAAKRGVPEGPAFGRLASGESVEVDGETIAPADVSRERTNRFPIDSPTDSAAEPPTEPSE.

The segment covering 22-37 (DLGDWERRDDPSRPDA) has biased composition (basic and acidic residues). 2 disordered regions span residues 22–44 (DLGD…GTYY) and 441–493 (PEGP…EPSE).

This sequence belongs to the DtdA deacylase family. Monomer. The cofactor is Zn(2+).

The enzyme catalyses a D-aminoacyl-tRNA + H2O = a tRNA + a D-alpha-amino acid + H(+). It catalyses the reaction glycyl-tRNA(Ala) + H2O = tRNA(Ala) + glycine + H(+). Its function is as follows. D-aminoacyl-tRNA deacylase with broad substrate specificity. By recycling D-aminoacyl-tRNA to D-amino acids and free tRNA molecules, this enzyme counteracts the toxicity associated with the formation of D-aminoacyl-tRNA entities in vivo. In Halorubrum lacusprofundi (strain ATCC 49239 / DSM 5036 / JCM 8891 / ACAM 34), this protein is D-aminoacyl-tRNA deacylase.